A 176-amino-acid chain; its full sequence is Ribosome maturation factor RimM (176 aa).

A PRC barrel domain is found at 97–176; that stretch reads EDEFYWRDLI…QILVDWDPDF (80 aa).

This sequence belongs to the RimM family. In terms of assembly, binds ribosomal protein uS19.

The protein resides in the cytoplasm. An accessory protein needed during the final step in the assembly of 30S ribosomal subunit, possibly for assembly of the head region. Essential for efficient processing of 16S rRNA. May be needed both before and after RbfA during the maturation of 16S rRNA. It has affinity for free ribosomal 30S subunits but not for 70S ribosomes. The chain is Ribosome maturation factor RimM from Shewanella oneidensis (strain ATCC 700550 / JCM 31522 / CIP 106686 / LMG 19005 / NCIMB 14063 / MR-1).